The following is a 430-amino-acid chain: uncharacterized protein (430 aa).

12 helical membrane-spanning segments follow: residues 36-56 (LFVVSISQIFGGAGLAAGVTV), 69-89 (AFAGLPSALFTLGSAGSALIV), 100-122 (TGLSAGFMIGGLGAIGVIMAAII), 126-148 (FLLFISLLIYGAGTATNLQARYA), 160-180 (TAVSITMVFTTFGAVAGPSLV), 197-217 (GPFILAAAAYMLAGVVLFIML), 253-273 (IIVGATVMVLTQIVMVAIMTM), 285-305 (LGAVGLVIGFHIGAMYLPSLV), 317-337 (AMAISSGTTLLLAGVIAAFAP), 340-360 (SMILLVIALSLLGLGWNFGLI), 384-404 (VLIALSGAAGGALSGMIVAGS), and 406-426 (YLALSLIGGILSLLLIPVVVW).

This sequence belongs to the major facilitator superfamily.

The protein resides in the cell membrane. This is an uncharacterized protein from Bacillus subtilis (strain 168).